Consider the following 189-residue polypeptide: Large ribosomal subunit protein uL5 (189 aa).

This sequence belongs to the universal ribosomal protein uL5 family. In terms of assembly, part of the 50S ribosomal subunit; part of the 5S rRNA/L5/L18/L25 subcomplex. Contacts the 5S rRNA and the P site tRNA. Forms a bridge to the 30S subunit in the 70S ribosome.

Functionally, this is one of the proteins that bind and probably mediate the attachment of the 5S RNA into the large ribosomal subunit, where it forms part of the central protuberance. In the 70S ribosome it contacts protein S13 of the 30S subunit (bridge B1b), connecting the 2 subunits; this bridge is implicated in subunit movement. Contacts the P site tRNA; the 5S rRNA and some of its associated proteins might help stabilize positioning of ribosome-bound tRNAs. This is Large ribosomal subunit protein uL5 from Kineococcus radiotolerans (strain ATCC BAA-149 / DSM 14245 / SRS30216).